The following is a 181-amino-acid chain: Adenine phosphoribosyltransferase (181 aa).

This sequence belongs to the purine/pyrimidine phosphoribosyltransferase family. As to quaternary structure, homodimer.

Its subcellular location is the cytoplasm. It carries out the reaction AMP + diphosphate = 5-phospho-alpha-D-ribose 1-diphosphate + adenine. It functions in the pathway purine metabolism; AMP biosynthesis via salvage pathway; AMP from adenine: step 1/1. Its function is as follows. Catalyzes a salvage reaction resulting in the formation of AMP, that is energically less costly than de novo synthesis. The polypeptide is Adenine phosphoribosyltransferase (Vibrio cholerae serotype O1 (strain ATCC 39541 / Classical Ogawa 395 / O395)).